Consider the following 277-residue polypeptide: Caspase-3 (277 aa).

Met-1 is subject to N-acetylmethionine. 2 propeptides span residues 1 to 9 and 10 to 28; these read MENNETSVD and SKSIKNFEVKTIHGSKSMD. Lys-11 is modified (N6-acetyllysine). Ser-26 is modified (phosphoserine). Residues His-121 and Cys-163 contribute to the active site. Position 163 is an S-nitrosocysteine; in inhibited form (Cys-163).

Belongs to the peptidase C14A family. As to quaternary structure, heterotetramer that consists of two anti-parallel arranged heterodimers, each one formed by a 17 kDa (p17) and a 12 kDa (p12) subunit. Interacts with BIRC6/bruce. Cleavage by granzyme B, caspase-6, caspase-8 and caspase-10 generates the two active subunits. Additional processing of the propeptides is likely due to the autocatalytic activity of the activated protease. Active heterodimers between the small subunit of caspase-7 protease and the large subunit of caspase-3 also occur and vice versa. In terms of processing, S-nitrosylated on its catalytic site cysteine in unstimulated cell lines and denitrosylated upon activation of the Fas apoptotic pathway, associated with an increase in intracellular caspase activity. Fas therefore activates caspase-3 not only by inducing the cleavage of the caspase zymogen to its active subunits, but also by stimulating the denitrosylation of its active site thiol. Post-translationally, ubiquitinated by BIRC6; this activity is inhibited by DIABLO/SMAC.

Its subcellular location is the cytoplasm. It catalyses the reaction Strict requirement for an Asp residue at positions P1 and P4. It has a preferred cleavage sequence of Asp-Xaa-Xaa-Asp-|- with a hydrophobic amino-acid residue at P2 and a hydrophilic amino-acid residue at P3, although Val or Ala are also accepted at this position.. Its activity is regulated as follows. Inhibited by BIRC6; following inhibition of BIRC6-caspase binding by DIABLO/SMAC, BIRC6 is subjected to caspase cleavage, leading to an increase in active caspases. Functionally, involved in the activation cascade of caspases responsible for apoptosis execution. At the onset of apoptosis, it proteolytically cleaves poly(ADP-ribose) polymerase PARP1 at a '216-Asp-|-Gly-217' bond. Cleaves and activates sterol regulatory element binding proteins (SREBPs) between the basic helix-loop-helix leucine zipper domain and the membrane attachment domain. Cleaves and activates caspase-6, -7 and -9 (CASP6, CASP7 and CASP9, respectively). Cleaves and inactivates interleukin-18 (IL18). Triggers cell adhesion in sympathetic neurons through RET cleavage. Cleaves IL-1 beta between an Asp and an Ala, releasing the mature cytokine which is involved in a variety of inflammatory processes. Cleaves and inhibits serine/threonine-protein kinase AKT1 in response to oxidative stress. Acts as an inhibitor of type I interferon production during virus-induced apoptosis by mediating cleavage of antiviral proteins CGAS, IRF3 and MAVS, thereby preventing cytokine overproduction. Also involved in pyroptosis by mediating cleavage and activation of gasdermin-E (GSDME). Cleaves XRCC4 and phospholipid scramblase proteins XKR4, XKR8 and XKR9, leading to promote phosphatidylserine exposure on apoptotic cell surface. Cleaves BIRC6 following inhibition of BIRC6-caspase binding by DIABLO/SMAC. The protein is Caspase-3 (CASP3) of Mesocricetus auratus (Golden hamster).